A 276-amino-acid chain; its full sequence is 3-methyl-2-oxobutanoate hydroxymethyltransferase (276 aa).

Asp-49 and Asp-88 together coordinate Mg(2+). 3-methyl-2-oxobutanoate is bound by residues 49–50 (DS), Asp-88, and Lys-118. Residue Glu-120 participates in Mg(2+) binding. Glu-187 acts as the Proton acceptor in catalysis.

It belongs to the PanB family. In terms of assembly, homodecamer; pentamer of dimers. Mg(2+) serves as cofactor.

The protein localises to the cytoplasm. It catalyses the reaction 3-methyl-2-oxobutanoate + (6R)-5,10-methylene-5,6,7,8-tetrahydrofolate + H2O = 2-dehydropantoate + (6S)-5,6,7,8-tetrahydrofolate. The protein operates within cofactor biosynthesis; (R)-pantothenate biosynthesis; (R)-pantoate from 3-methyl-2-oxobutanoate: step 1/2. In terms of biological role, catalyzes the reversible reaction in which hydroxymethyl group from 5,10-methylenetetrahydrofolate is transferred onto alpha-ketoisovalerate to form ketopantoate. This chain is 3-methyl-2-oxobutanoate hydroxymethyltransferase, found in Afipia carboxidovorans (strain ATCC 49405 / DSM 1227 / KCTC 32145 / OM5) (Oligotropha carboxidovorans).